The primary structure comprises 607 residues: Arginine decarboxylase (607 aa).

At lysine 104 the chain carries N6-(pyridoxal phosphate)lysine. 290–300 (LDCGGGLGVDY) is a binding site for substrate.

Belongs to the Orn/Lys/Arg decarboxylase class-II family. SpeA subfamily. Requires pyridoxal 5'-phosphate as cofactor. Mg(2+) serves as cofactor.

The enzyme catalyses L-arginine + H(+) = agmatine + CO2. It functions in the pathway amine and polyamine biosynthesis; agmatine biosynthesis; agmatine from L-arginine: step 1/1. This chain is Arginine decarboxylase (SPE1), found in Avena sativa (Oat).